We begin with the raw amino-acid sequence, 910 residues long: Protein translocase subunit SecA (910 aa).

Residues Gln-87, 105–109 (GEGKT), and Asp-508 contribute to the ATP site. Residues 848-910 (RLSQSQFQHQ…KYKHCHGQLS (63 aa)) are disordered. Positions 869–880 (AQVQAAQQGVAQ) are enriched in low complexity. Zn(2+) is bound by residues Cys-894, Cys-896, Cys-905, and His-906. Basic residues predominate over residues 900–910 (KKYKHCHGQLS).

This sequence belongs to the SecA family. As to quaternary structure, monomer and homodimer. Part of the essential Sec protein translocation apparatus which comprises SecA, SecYEG and auxiliary proteins SecDF-YajC and YidC. It depends on Zn(2+) as a cofactor.

Its subcellular location is the cell inner membrane. It is found in the cytoplasm. The catalysed reaction is ATP + H2O + cellular proteinSide 1 = ADP + phosphate + cellular proteinSide 2.. In terms of biological role, part of the Sec protein translocase complex. Interacts with the SecYEG preprotein conducting channel. Has a central role in coupling the hydrolysis of ATP to the transfer of proteins into and across the cell membrane, serving both as a receptor for the preprotein-SecB complex and as an ATP-driven molecular motor driving the stepwise translocation of polypeptide chains across the membrane. This is Protein translocase subunit SecA from Stenotrophomonas maltophilia (strain K279a).